A 369-amino-acid polypeptide reads, in one-letter code: 2-aminoethylphosphonate--pyruvate transaminase (369 aa).

N6-(pyridoxal phosphate)lysine is present on lysine 193.

This sequence belongs to the class-V pyridoxal-phosphate-dependent aminotransferase family. PhnW subfamily. Homodimer. Pyridoxal 5'-phosphate serves as cofactor.

It catalyses the reaction (2-aminoethyl)phosphonate + pyruvate = phosphonoacetaldehyde + L-alanine. Functionally, involved in phosphonate degradation. This chain is 2-aminoethylphosphonate--pyruvate transaminase, found in Burkholderia mallei (strain NCTC 10247).